An 840-amino-acid polypeptide reads, in one-letter code: Translation initiation factor IF-2 (840 aa).

Basic and acidic residues predominate over residues 95 to 143 (RSPDEIEAERQRELEEQRAAEEAERLKAEEAAARQRAEEEARKAEEAAR). Disordered stretches follow at residues 95–155 (RSPD…ATAG) and 172–256 (KPAA…PTGP). Low complexity predominate over residues 144 to 155 (AKAAQEAAATAG). Basic and acidic residues-rich tracts occupy residues 175–191 (AVEE…PKRD) and 223–232 (STDEESDGYR). The span at 233–247 (RGGRGGKSKLKKRNQ) shows a compositional bias: basic residues. The region spanning 340–509 (TRAPVVTVMG…LLQAEVLELK (170 aa)) is the tr-type G domain. The tract at residues 349-356 (GHVDHGKT) is G1. 349-356 (GHVDHGKT) lines the GTP pocket. Residues 374-378 (GITQH) form a G2 region. Positions 395–398 (DTPG) are G3. Residues 395–399 (DTPGH) and 449–452 (NKID) each bind GTP. Residues 449–452 (NKID) form a G4 region. The G5 stretch occupies residues 485-487 (SAK).

It belongs to the TRAFAC class translation factor GTPase superfamily. Classic translation factor GTPase family. IF-2 subfamily.

Its subcellular location is the cytoplasm. One of the essential components for the initiation of protein synthesis. Protects formylmethionyl-tRNA from spontaneous hydrolysis and promotes its binding to the 30S ribosomal subunits. Also involved in the hydrolysis of GTP during the formation of the 70S ribosomal complex. The protein is Translation initiation factor IF-2 of Pseudomonas aeruginosa (strain LESB58).